The sequence spans 413 residues: MASPAIGQRPYPLLLDPEPPRYLQSLGGTEPPPPARPRRCIPTALISASGASEGRGSRRNARGDPEPTPRDCRHARPVRPGLQQRLRRRPGSHRPRDVRSIFEQPQDPRVLAERGEGHRFAELALRGGPGWCDLCGREVLRQALRCANCKFTCHPECRSLIQLDCRQKEGPALDRQSPESTLTPTFNKNVCKAVEETQHPPTIQEIKQKIDSYNSREKHCLGMKLSEDGTYTGFIKVHLKLRRPVTVPAGIRPQSIYDAIKEVNPAATTDKRTSFYLPLDAIKQLHISSSTTVSEVIQGLLKKFMVVDNPQKFALFKRIHKDGQVLFQKLSIADCPLYLRLLAGPDTDVLSFVLKENETGDVEWDAFSIPELQNFLTILEKEEQDKIHQLQKKYNKFRQKLEEALRESQGKPG.

The disordered stretch occupies residues 1–105 (MASPAIGQRP…RDVRSIFEQP (105 aa)). Residues 61–74 (ARGDPEPTPRDCRH) are compositionally biased toward basic and acidic residues. The Phorbol-ester/DAG-type zinc finger occupies 117–165 (GHRFAELALRGGPGWCDLCGREVLRQALRCANCKFTCHPECRSLIQLDC). Phosphoserine is present on residues Ser177 and Ser274. Positions 265–359 (PAATTDKRTS…LSFVLKENET (95 aa)) constitute a Ras-associating domain. Thr347 is modified (phosphothreonine). The SARAH domain occupies 361-408 (DVEWDAFSIPELQNFLTILEKEEQDKIHQLQKKYNKFRQKLEEALRES).

Interacts directly with activated HRAS; a RASSF5-STK4/MST1 complex probably associates with activated HRAS. Interacts with KRAS. Probably interacts with Ras-like GTPases RRAS, MRAS, RAP1B, RAP2A and RALA. Interacts with RRAS2. Can self-associate. Interacts with RSSF1 isoform A. The RSSF1 isoform A-RSSF5 heterodimer probably mediates the association of RSSF1 with HRAS. Isoform 2 interacts with activated RAP1A and ITGAL/LFA-1. Binds STK4/MST1, inhibiting STK4/MST1 autoactivation.

The protein resides in the cytoplasm. The protein localises to the cytoskeleton. Potential tumor suppressor. Seems to be involved in lymphocyte adhesion by linking RAP1A activation upon T-cell receptor or chemokine stimulation to integrin activation. Stimulates lymphocyte polarization and the patch-like distribution of ITGAL/LFA-1, resulting in an enhanced adhesion to ICAM1. Together with RAP1A may participate in regulation of microtubule growth. The association with activated RAP1A is required for directional movement of endothelial cells during wound healing. May be involved in regulation of Ras apoptotic function. The RASSF5-STK4/MST1 complex may mediate HRAS and KRAS induced apoptosis. This chain is Ras association domain-containing protein 5 (Rassf5), found in Rattus norvegicus (Rat).